The sequence spans 663 residues: Innate immunity activator protein (663 aa).

A disordered region spans residues 1 to 73 (MLQMPKLNEI…PGPGWDQCSP (73 aa)). Over residues 23–47 (EGRWAGPTGPEAARPARGARGQARG) the composition is skewed to low complexity. A compositionally biased stretch (basic and acidic residues) spans 50–59 (ARWDSWEHSR). Residues 117 to 147 (NAVRKQQRALEARLEACLEELRRLCLREAEL) are a coiled coil. The Nuclear localization signal (NLS) 1 signature appears at 164 to 170 (PKVRRRI). Disordered stretches follow at residues 219 to 363 (RQRK…SSLW) and 375 to 405 (IRNVPGQRQGRTSAPATPEMQGRRGQSQSLR). The span at 225–246 (ALQEEKKLRDLQRCLGDRRRNS) shows a compositional bias: basic and acidic residues. Over residues 259 to 272 (ELSASDDSSLSDGL) the composition is skewed to low complexity. The segment covering 282–298 (PKPPPESPAPPSRPLPP) has biased composition (pro residues). The span at 327 to 340 (TSLDHPYEKPRKSS) shows a compositional bias: basic and acidic residues. The Nuclear localization signal (NLS) 2 signature appears at 332–338 (PYEKPRK). Residues 349-361 (PATTPQDQPNPSS) are compositionally biased toward polar residues. The Nuclear localization signal (NLS) 3 signature appears at 422-428 (PRRRPTH). Residues 448-483 (PACHSCSEDSGSDVSSISHPTSPGSSSPDISFLRPL) are disordered. A compositionally biased stretch (low complexity) spans 455 to 475 (EDSGSDVSSISHPTSPGSSSP).

Interacts with IRAK1, NOD2 and RIPK2; the interaction takes place upon PRR stimulation. Interacts with YWHAQ/14-3-3T; the interaction increases upon PRR stimulation and is required for cellular signaling pathway activation and cytokine secretion. Interacts (via N-terminal domain) with CYTH1 and CYTH2 (via their N-terminal domains). Interacts with FBXW11 and BTRC; associates with SCF E3 ubiquitin-protein ligase complexes.

Its subcellular location is the nucleus. The protein resides in the cytoplasm. Expressed in peripheral macrophages and intestinal myeloid-derived cells, is required for optimal PRR (pattern recognition receptor)-induced signaling, cytokine secretion, and bacterial clearance. Upon stimulation of a broad range of PRRs (pattern recognition receptor) such as NOD2 or TLR2, TLR3, TLR4, TLR5, TLR7 and TLR9, associates with YWHAQ/14-3-3T, which in turn leads to the recruitment and activation of MAP kinases and NF-kappa-B signaling complexes that amplifies PRR-induced downstream signals and cytokine secretion. In the intestine, regulates adherens junction stability by regulating the degradation of CYTH1 and CYTH2, probably acting as substrate cofactor for SCF E3 ubiquitin-protein ligase complexes. Stabilizes adherens junctions by limiting CYTH1-dependent ARF6 activation. This Mus musculus (Mouse) protein is Innate immunity activator protein.